A 312-amino-acid polypeptide reads, in one-letter code: Transcription initiation factor IIB 1 (312 aa).

The segment at 12–43 (EIERCPECGSTNLIRDYEHGELVCGECGAVIE) adopts a TFIIB-type zinc-finger fold. Positions 16, 19, 35, and 38 each coordinate Zn(2+). 2 consecutive repeat copies span residues 129 to 212 (QELE…SRYL) and 223 to 304 (DYIS…ELTE).

It belongs to the TFIIB family.

Functionally, stabilizes TBP binding to an archaeal box-A promoter. Also responsible for recruiting RNA polymerase II to the pre-initiation complex (DNA-TBP-TFIIB). In Thermoplasma volcanium (strain ATCC 51530 / DSM 4299 / JCM 9571 / NBRC 15438 / GSS1), this protein is Transcription initiation factor IIB 1.